The following is an 808-amino-acid chain: Bifunctional uridylyltransferase/uridylyl-removing enzyme (808 aa).

The tract at residues 1–315 (MEAESPCAAS…ALVRRPKRRP (315 aa)) is uridylyltransferase. The tract at residues 316-609 (LDEGVVEYAG…EISPRDGERI (294 aa)) is uridylyl-removing. The HD domain maps to 430–544 (VDRHVVETAV…LEVLHALSEA (115 aa)). ACT domains lie at 610–686 (DAVI…GMLQ) and 730–805 (ILEV…VDEP).

Belongs to the GlnD family. It depends on Mg(2+) as a cofactor.

The enzyme catalyses [protein-PII]-L-tyrosine + UTP = [protein-PII]-uridylyl-L-tyrosine + diphosphate. It catalyses the reaction [protein-PII]-uridylyl-L-tyrosine + H2O = [protein-PII]-L-tyrosine + UMP + H(+). Functionally, modifies, by uridylylation and deuridylylation, the PII regulatory protein (GlnB), in response to the nitrogen status of the cell that GlnD senses through the glutamine level. Under low glutamine levels, catalyzes the conversion of the PII protein and UTP to PII-UMP and PPi, while under higher glutamine levels, GlnD hydrolyzes PII-UMP to PII and UMP (deuridylylation). Thus, controls uridylylation state and activity of the PII protein, and plays an important role in the regulation of nitrogen assimilation and metabolism. The polypeptide is Bifunctional uridylyltransferase/uridylyl-removing enzyme (Mycobacterium tuberculosis (strain CDC 1551 / Oshkosh)).